Here is an 86-residue protein sequence, read N- to C-terminus: MAQKKGGGSTRNGRDSESKRLGVKVFGGQQIPAGSIIVRQRGTRFHPGTNVGIGKDHTLFALIDGKVQFGFKGALNKQVVSVVAAE.

Gly residues predominate over residues 1-10 (MAQKKGGGST). The disordered stretch occupies residues 1 to 21 (MAQKKGGGSTRNGRDSESKRL).

This sequence belongs to the bacterial ribosomal protein bL27 family.

This is Large ribosomal subunit protein bL27 from Bordetella petrii (strain ATCC BAA-461 / DSM 12804 / CCUG 43448).